Reading from the N-terminus, the 645-residue chain is Cyclic nucleotide-gated channel rod photoreceptor subunit alpha (645 aa).

The Cytoplasmic portion of the chain corresponds to 1–121 (MKVGVIETHH…PAGNMYYNWL (121 aa)). Residues 53–100 (NNNSNKDEEKKKKKEKKSKSENKKDGERQKNKEKKEKHKNKDKKKGKE) are disordered. A compositionally biased stretch (basic and acidic residues) spans 70-86 (SKSENKKDGERQKNKEK). Positions 87–96 (KEKHKNKDKK) are enriched in basic residues. Residues 122–143 (FCITMPVMYNWTMIIARACFDE) form a helical membrane-spanning segment. At 144–153 (LQNDYLAVWF) the chain is on the extracellular side. The helical transmembrane segment at 154–174 (IVDYVSDVIYIADMFVRTRTG) threads the bilayer. At 175-199 (YLEQGLLVKEEQKLKEKYKSSLQFK) the chain is on the cytoplasmic side. A helical membrane pass occupies residues 200–218 (LDFLSIIPTDLLYFKLGLN). The Extracellular portion of the chain corresponds to 219 to 223 (YPELR). Residues 224 to 242 (INRLLRVARMFEFFQRTET) traverse the membrane as a helical segment. The Cytoplasmic portion of the chain corresponds to 243–249 (RTNYPNI). A helical membrane pass occupies residues 250 to 273 (FRISNLVMYIVIIIHWNACVYYSI). The Extracellular portion of the chain corresponds to 274 to 296 (SKAIGFGADTWVYPNTSHPEFAR). Helical transmembrane passes span 297-331 (LTRK…FFVV) and 332-356 (VDFL…SNMN). The Cytoplasmic segment spans residues 357–645 (AARAEFQAKI…TDKPGVTKTE (289 aa)). Residues 439–561 (LLVE…DGLL), Glu-498, and Arg-513 each bind 3',5'-cyclic GMP.

It belongs to the cyclic nucleotide-gated cation channel (TC 1.A.1.5) family.

It localises to the membrane. Its function is as follows. Visual signal transduction is mediated by a G-protein coupled cascade using cGMP as second messenger. This protein can be activated by cGMP which leads to an opening of the cation channel and thereby causing a depolarization of rod photoreceptors. The sequence is that of Cyclic nucleotide-gated channel rod photoreceptor subunit alpha from Gallus gallus (Chicken).